The following is a 457-amino-acid chain: MTKKVYVKTFGCQMNEYDSDKMVDVLGAAEGLVKTDTPEDADVILFNTCSVREKAQEKVFSDLGRVRELKEANPNLIIGVGGCVASQEGASIVARAPYVDLVFGPQTLHRLPQMIDKRRESGRAQVDISFPEIEKFDHLPPARVDGPSAFVSIMEGCSKYCSYCVVPYTRGEEVSRPLDDVLTEIAGLADQGVREVTLLGQNVNAYRAGLTLGSTEIADFAQLIEYVADIPGIERIRYTTSHPKEFTQRLIDTYAKVPKLVSHLHLPVQHGSDRILMAMKRGYTVLEYKSVIRKLRAIRPDLSLSTDLIVGFPGETEEDFDKMMTLVHEMKYDTSFSFIYSPRPGTPAANLHDDTPREVKLRRLQHLQATIEENVQRISDSMVGKIERILVERPARKDPNELAGRTENNRVVNFPAPVASHARLIGQMVDVKIVKAYPHSLRGELVLVHDEAPATTH.

The region spanning 3–120 (KKVYVKTFGC…LPQMIDKRRE (118 aa)) is the MTTase N-terminal domain. C12, C49, C83, C157, C161, and C164 together coordinate [4Fe-4S] cluster. The Radical SAM core domain maps to 143–377 (RVDGPSAFVS…QATIEENVQR (235 aa)). The TRAM domain occupies 380-447 (DSMVGKIERI…PHSLRGELVL (68 aa)).

This sequence belongs to the methylthiotransferase family. MiaB subfamily. In terms of assembly, monomer. [4Fe-4S] cluster is required as a cofactor.

The protein resides in the cytoplasm. It carries out the reaction N(6)-dimethylallyladenosine(37) in tRNA + (sulfur carrier)-SH + AH2 + 2 S-adenosyl-L-methionine = 2-methylsulfanyl-N(6)-dimethylallyladenosine(37) in tRNA + (sulfur carrier)-H + 5'-deoxyadenosine + L-methionine + A + S-adenosyl-L-homocysteine + 2 H(+). Functionally, catalyzes the methylthiolation of N6-(dimethylallyl)adenosine (i(6)A), leading to the formation of 2-methylthio-N6-(dimethylallyl)adenosine (ms(2)i(6)A) at position 37 in tRNAs that read codons beginning with uridine. The chain is tRNA-2-methylthio-N(6)-dimethylallyladenosine synthase from Paraburkholderia xenovorans (strain LB400).